The sequence spans 228 residues: Aspartate racemase (228 aa).

Position 47–49 (47–49 (DRT)) interacts with substrate. The active-site Proton donor/acceptor is the Cys-82. Residues 83–85 (NTA) and Lys-164 each bind substrate. The active-site Proton donor/acceptor is Cys-194.

This sequence belongs to the aspartate/glutamate racemases family. Homodimer. The existence of the interchain disulfide bond seen in the crystal structures is uncertain, but disulfide bonds have been reported for cytoplasmic proteins from thermophiles.

It carries out the reaction L-aspartate = D-aspartate. Its activity is regulated as follows. Weakly inhibited by citrate, but not by asparagine. This chain is Aspartate racemase, found in Pyrococcus horikoshii (strain ATCC 700860 / DSM 12428 / JCM 9974 / NBRC 100139 / OT-3).